The sequence spans 248 residues: NAD(P)H-quinone oxidoreductase subunit K 1 (248 aa).

Positions M1–S2 are excised as a propeptide. [4Fe-4S] cluster-binding residues include C62, C63, C127, and C158. The interval M228–G248 is disordered. The segment covering L236 to G248 has biased composition (polar residues).

Belongs to the complex I 20 kDa subunit family. NDH-1 can be composed of about 15 different subunits; different subcomplexes with different compositions have been identified which probably have different functions. The cofactor is [4Fe-4S] cluster.

The protein resides in the cellular thylakoid membrane. The catalysed reaction is a plastoquinone + NADH + (n+1) H(+)(in) = a plastoquinol + NAD(+) + n H(+)(out). It carries out the reaction a plastoquinone + NADPH + (n+1) H(+)(in) = a plastoquinol + NADP(+) + n H(+)(out). Its function is as follows. NDH-1 shuttles electrons from an unknown electron donor, via FMN and iron-sulfur (Fe-S) centers, to quinones in the respiratory and/or the photosynthetic chain. The immediate electron acceptor for the enzyme in this species is believed to be plastoquinone. Couples the redox reaction to proton translocation, and thus conserves the redox energy in a proton gradient. Cyanobacterial NDH-1 also plays a role in inorganic carbon-concentration. This chain is NAD(P)H-quinone oxidoreductase subunit K 1, found in Synechocystis sp. (strain ATCC 27184 / PCC 6803 / Kazusa).